Consider the following 166-residue polypeptide: MSWFTGASLAAGSLVDMAGTISSIVAQQRQIDLMAEANRIQADWVRRQEALQIRGQDISRDLAVNGTAQRVESLVNAGFTPVDARRLAGGTETVSYGLLDRPILQRGILSGITETRHLQAMQGALSAFKNGASYGAPPAPSGFVNPNYQPSPPRLKLGPRPPSTNV.

The tract at residues 138–166 is disordered; the sequence is PAPSGFVNPNYQPSPPRLKLGPRPPSTNV. Positions 149–166 are enriched in pro residues; sequence QPSPPRLKLGPRPPSTNV.

Belongs to the vesivirus VP2 protein family. As to quaternary structure, homooligomer. The portal-like structure consists in 12 copies of VP2. Interacts with capsid protein VP1.

It is found in the virion. Its subcellular location is the host cytoplasm. In terms of biological role, minor structural protein that forms a portal-like structure at a unique three-fold axis of symmetry, following binding to the host receptor. The channel formed by VP2 may allow the delivery of the viral genome through the host endosomal membrane. This is Minor capsid protein VP2 from Homo sapiens (Human).